The chain runs to 218 residues: 3,4-dihydroxy-2-butanone 4-phosphate synthase (218 aa).

D-ribulose 5-phosphate is bound by residues 38 to 39 (RE), D43, 151 to 155 (RRGHT), and E175. E39 contributes to the Mg(2+) binding site. A Mg(2+)-binding site is contributed by H154.

Belongs to the DHBP synthase family. In terms of assembly, homodimer. Mg(2+) serves as cofactor. Requires Mn(2+) as cofactor.

It catalyses the reaction D-ribulose 5-phosphate = (2S)-2-hydroxy-3-oxobutyl phosphate + formate + H(+). It participates in cofactor biosynthesis; riboflavin biosynthesis; 2-hydroxy-3-oxobutyl phosphate from D-ribulose 5-phosphate: step 1/1. Its function is as follows. Catalyzes the conversion of D-ribulose 5-phosphate to formate and 3,4-dihydroxy-2-butanone 4-phosphate. The polypeptide is 3,4-dihydroxy-2-butanone 4-phosphate synthase (Vibrio atlanticus (strain LGP32) (Vibrio splendidus (strain Mel32))).